Here is a 250-residue protein sequence, read N- to C-terminus: mRNA-decapping protein g5R (250 aa).

The 143-residue stretch at glutamine 97–phenylalanine 239 folds into the Nudix hydrolase domain. Residues glycine 132–glycine 153 carry the Nudix box motif. A Mg(2+)-binding site is contributed by glutamate 138. The active-site Nucleophile is the glutamate 147. Positions 151 and 173 each coordinate Mg(2+).

Belongs to the Nudix hydrolase family. DIPP subfamily. In terms of assembly, interacts with host RPL23A. Requires Mg(2+) as cofactor. The cofactor is Mn(2+).

Its subcellular location is the host rough endoplasmic reticulum. It catalyses the reaction diphospho-myo-inositol polyphosphate + H2O = myo-inositol polyphosphate + phosphate.. Its function is as follows. Decapping enzyme required for the removal of the 5'-end m7GpppN cap tethered to viral and host mRNAs to allow their decay in cells. May therefore accelerate viral and cellular mRNA turnover to eliminate competing host mRNAs and allow stage-specific synthesis of viral proteins. Acceleration of the turnover of cellular transcripts may even promote the shutoff of host protein synthesis. In addition to the mRNA cap, g5R also efficiently hydrolyzes diphosphoinositol polyphosphates. Down-regulation of the level of PP-InsP5 (diphosphoinositol pentakisphosphate) may play a role in viral manipulation of the cellular secretory pathway, a step necessary for the formation of virions. Binds viral and cellular poly(A) mRNAs, thereby decreasing both types of mRNAs. The sequence is that of mRNA-decapping protein g5R from Ornithodoros (relapsing fever ticks).